Consider the following 603-residue polypeptide: Coiled-coil domain-containing protein 148 (603 aa).

2 coiled-coil regions span residues 365–429 and 461–510; these read LAKD…KKKK and EQSL…KQVA.

In Macaca fascicularis (Crab-eating macaque), this protein is Coiled-coil domain-containing protein 148 (CCDC148).